We begin with the raw amino-acid sequence, 709 residues long: Phosphomethylpyrimidine synthase (709 aa).

The segment covering 1–13 (MNIRSNPDTTLPA) has biased composition (polar residues). Disordered regions lie at residues 1–21 (MNIR…PLPS) and 125–168 (DAPA…GREQ). Residues Asn274, Met303, Tyr332, His368, 388–390 (SRG), 429–432 (DGLR), and Glu468 each bind substrate. His472 lines the Zn(2+) pocket. Tyr495 lines the substrate pocket. His536 contributes to the Zn(2+) binding site. [4Fe-4S] cluster contacts are provided by Cys616, Cys619, and Cys624.

Belongs to the ThiC family. In terms of assembly, homodimer. Requires [4Fe-4S] cluster as cofactor.

It catalyses the reaction 5-amino-1-(5-phospho-beta-D-ribosyl)imidazole + S-adenosyl-L-methionine = 4-amino-2-methyl-5-(phosphooxymethyl)pyrimidine + CO + 5'-deoxyadenosine + formate + L-methionine + 3 H(+). The protein operates within cofactor biosynthesis; thiamine diphosphate biosynthesis. Functionally, catalyzes the synthesis of the hydroxymethylpyrimidine phosphate (HMP-P) moiety of thiamine from aminoimidazole ribotide (AIR) in a radical S-adenosyl-L-methionine (SAM)-dependent reaction. The protein is Phosphomethylpyrimidine synthase of Rhodopseudomonas palustris (strain BisB18).